The following is a 228-amino-acid chain: Nucleolar protein 12 (228 aa).

The segment at 1–22 (MGKSDRLQQGSKGKGGGKRKHG) is disordered. Residues 40–103 (FHKRKLERRR…AITATTECVQ (64 aa)) are a coiled coil. The span at 126-145 (LLEPAQRDGGDGEERERTEA) shows a compositional bias: basic and acidic residues. The interval 126-228 (LLEPAQRDGG…QTGRNERSQD (103 aa)) is disordered. Polar residues predominate over residues 158–170 (KIQSLTASLNSLV). The segment covering 171–180 (KQKKRRKQKR) has biased composition (basic residues). A compositionally biased stretch (basic and acidic residues) spans 181–195 (RQEAKQRSHQSDRKS). Residues 204-220 (NKQKQGKSTKRQRRRQT) show a composition bias toward basic residues.

The protein belongs to the RRP17 family.

It is found in the nucleus. The protein localises to the nucleolus. May bind to rRNA. This is Nucleolar protein 12 (nol12) from Danio rerio (Zebrafish).